Here is a 664-residue protein sequence, read N- to C-terminus: Acetylcholinesterase (664 aa).

An N-terminal signal peptide occupies residues 1-29; that stretch reads MFVNQRTRRPYMSVFVLVLGAAVICPAYG. The cysteines at positions 95 and 122 are disulfide-linked. Asn-117 is a glycosylation site (N-linked (GlcNAc...) asparagine). Ser-261 (acyl-ester intermediate) is an active-site residue. An intrachain disulfide couples Cys-315 to Cys-330. Asn-316 is a glycosylation site (N-linked (GlcNAc...) asparagine). Active-site charge relay system residues include Glu-390 and His-504. An intrachain disulfide couples Cys-466 to Cys-588. N-linked (GlcNAc...) asparagine glycosylation occurs at Asn-517. Asn-647 carries GPI-anchor amidated asparagine lipidation. The propeptide at 648–664 is removed in mature form; that stretch reads KTPPHPQVILETRAFMH.

It belongs to the type-B carboxylesterase/lipase family. In terms of assembly, homodimer; disulfide-linked.

Its subcellular location is the synapse. The protein resides in the cell membrane. The catalysed reaction is acetylcholine + H2O = choline + acetate + H(+). Its function is as follows. Rapidly hydrolyzes choline released into the synapse. It can hydrolyze butyrylthiocholine. This is Acetylcholinesterase from Anopheles stephensi (Indo-Pakistan malaria mosquito).